A 1166-amino-acid chain; its full sequence is ATP-dependent helicase/deoxyribonuclease subunit B (1166 aa).

Residues 1–285 enclose the UvrD-like helicase ATP-binding domain; sequence MGAVFLSGRS…VRLEETKRHR (285 aa). An ATP-binding site is contributed by 8–15; that stretch reads GRSGSGKT. The region spanning 279–586 is the UvrD-like helicase C-terminal domain; that stretch reads EETKRHRHHP…KFALIPPALD (308 aa). Residues cysteine 801, cysteine 1121, cysteine 1124, and cysteine 1130 each contribute to the [4Fe-4S] cluster site.

This sequence belongs to the helicase family. AddB/RexB type 1 subfamily. As to quaternary structure, heterodimer of AddA and AddB. Requires Mg(2+) as cofactor. [4Fe-4S] cluster serves as cofactor.

In terms of biological role, the heterodimer acts as both an ATP-dependent DNA helicase and an ATP-dependent, dual-direction single-stranded exonuclease. Recognizes the chi site generating a DNA molecule suitable for the initiation of homologous recombination. The AddB subunit has 5' -&gt; 3' nuclease activity but not helicase activity. The protein is ATP-dependent helicase/deoxyribonuclease subunit B of Bacillus licheniformis (strain ATCC 14580 / DSM 13 / JCM 2505 / CCUG 7422 / NBRC 12200 / NCIMB 9375 / NCTC 10341 / NRRL NRS-1264 / Gibson 46).